Consider the following 426-residue polypeptide: 3-phosphoshikimate 1-carboxyvinyltransferase (426 aa).

3-phosphoshikimate contacts are provided by Lys23, Ser24, and Arg28. Lys23 contributes to the phosphoenolpyruvate binding site. Phosphoenolpyruvate is bound by residues Gly96 and Arg124. Thr170, Ser171, Gln172, Ser198, Asp314, and Lys341 together coordinate 3-phosphoshikimate. Gln172 lines the phosphoenolpyruvate pocket. Asp314 serves as the catalytic Proton acceptor. The phosphoenolpyruvate site is built by Arg345, Arg386, and Lys411.

Belongs to the EPSP synthase family. Monomer.

The protein localises to the cytoplasm. It catalyses the reaction 3-phosphoshikimate + phosphoenolpyruvate = 5-O-(1-carboxyvinyl)-3-phosphoshikimate + phosphate. It functions in the pathway metabolic intermediate biosynthesis; chorismate biosynthesis; chorismate from D-erythrose 4-phosphate and phosphoenolpyruvate: step 6/7. Its function is as follows. Catalyzes the transfer of the enolpyruvyl moiety of phosphoenolpyruvate (PEP) to the 5-hydroxyl of shikimate-3-phosphate (S3P) to produce enolpyruvyl shikimate-3-phosphate and inorganic phosphate. The protein is 3-phosphoshikimate 1-carboxyvinyltransferase of Trichormus variabilis (strain ATCC 29413 / PCC 7937) (Anabaena variabilis).